The following is a 247-amino-acid chain: ATP synthase subunit a, chloroplastic (247 aa).

5 helical membrane-spanning segments follow: residues Gln-38–Val-58, Val-95–Leu-115, Ile-134–Ser-154, Leu-199–Leu-219, and Gly-220–Gly-240.

It belongs to the ATPase A chain family. As to quaternary structure, F-type ATPases have 2 components, CF(1) - the catalytic core - and CF(0) - the membrane proton channel. CF(1) has five subunits: alpha(3), beta(3), gamma(1), delta(1), epsilon(1). CF(0) has four main subunits: a, b, b' and c.

It localises to the plastid. Its subcellular location is the chloroplast thylakoid membrane. Key component of the proton channel; it plays a direct role in the translocation of protons across the membrane. This Cucumis sativus (Cucumber) protein is ATP synthase subunit a, chloroplastic.